We begin with the raw amino-acid sequence, 279 residues long: Urease accessory protein UreD (279 aa).

Belongs to the UreD family. UreD, UreF and UreG form a complex that acts as a GTP-hydrolysis-dependent molecular chaperone, activating the urease apoprotein by helping to assemble the nickel containing metallocenter of UreC. The UreE protein probably delivers the nickel.

It is found in the cytoplasm. Functionally, required for maturation of urease via the functional incorporation of the urease nickel metallocenter. This Rhodopseudomonas palustris (strain HaA2) protein is Urease accessory protein UreD.